The sequence spans 874 residues: Speckle targeted PIP5K1A-regulated poly(A) polymerase (874 aa).

The segment at 16–46 (FRCCLCHVTTANRPSLDAHLGGRKHRHLVEL) adopts a Matrin-type zinc-finger fold. Residues 56–128 (RSVFVSGFPR…HRLRVRPREQ (73 aa)) form the RRM domain. The tract at residues 113–146 (QHSLGGHRLRVRPREQKEFQSPASKSPKGAAPDS) is disordered. S205 is a binding site for ATP. The Mg(2+) site is built by D216 and D218. UTP contacts are provided by D216 and D218. The disordered stretch occupies residues 252-334 (QALACTPASP…ELAETPKEEK (83 aa)). The segment covering 259–269 (ASPPDSQPPAS) has biased composition (pro residues). Residues 280–291 (TPSSSLAPQTPD) show a composition bias toward polar residues. Position 392 (N392) interacts with ATP. The UTP site is built by N392, R414, Y432, and H549. The region spanning 491–549 (LSSLLAQFFSCVSCWDLRGSLLSLREGQALPVAGGLPSNLWEGLRLGPLNLQDPFDLSH) is the PAP-associated domain. Positions 598–874 (SSPSSLLSAT…FLPQAIRHLK (277 aa)) are KA1; binds the bulging loops of U6 snRNA but is dispensable for terminal uridylyltransferase activity. Disordered regions lie at residues 638 to 662 (ATKRTRSEGGGTGESSQGGTSKRLK) and 705 to 761 (MQSP…ASLP). A Phosphoserine modification is found at S750.

The protein belongs to the DNA polymerase type-B-like family. As to quaternary structure, associates with the cleavage and polyadenylation specificity factor (CPSF) complex. Interacts with CPSF1 and CPSF3; the interaction is direct. Interacts with PIP5K1A. The cofactor is Mg(2+). Mn(2+) serves as cofactor. Phosphorylated by CK1 in the proline-rich (Pro-rich) region. Widely expressed.

It localises to the nucleus. The protein resides in the nucleolus. The protein localises to the nucleus speckle. The catalysed reaction is RNA(n) + UTP = RNA(n)-3'-uridine ribonucleotide + diphosphate. It catalyses the reaction RNA(n) + ATP = RNA(n)-3'-adenine ribonucleotide + diphosphate. Adenylyltransferase activity is specifically phosphatidylinositol 4,5-bisphosphate (PtdIns(4,5)P2). Poly(A) polymerase that creates the 3'-poly(A) tail of specific pre-mRNAs. Localizes to nuclear speckles together with PIP5K1A and mediates polyadenylation of a select set of mRNAs, such as HMOX1. In addition to polyadenylation, it is also required for the 3'-end cleavage of pre-mRNAs: binds to the 3'UTR of targeted pre-mRNAs and promotes the recruitment and assembly of the CPSF complex on the 3'UTR of pre-mRNAs. In addition to adenylyltransferase activity, also has uridylyltransferase activity. However, the ATP ratio is higher than UTP in cells, suggesting that it functions primarily as a poly(A) polymerase. Acts as a specific terminal uridylyltransferase for U6 snRNA in vitro: responsible for a controlled elongation reaction that results in the restoration of the four 3'-terminal UMP-residues found in newly transcribed U6 snRNA. Not involved in replication-dependent histone mRNA degradation. This is Speckle targeted PIP5K1A-regulated poly(A) polymerase (TUT1) from Homo sapiens (Human).